We begin with the raw amino-acid sequence, 339 residues long: Aspartate carbamoyltransferase catalytic subunit (339 aa).

Carbamoyl phosphate-binding residues include arginine 69 and threonine 70. Lysine 97 is a binding site for L-aspartate. Positions 119, 149, and 152 each coordinate carbamoyl phosphate. L-aspartate-binding residues include arginine 182 and arginine 237. Carbamoyl phosphate is bound by residues glycine 278 and proline 279.

Belongs to the aspartate/ornithine carbamoyltransferase superfamily. ATCase family. In terms of assembly, heterododecamer (2C3:3R2) of six catalytic PyrB chains organized as two trimers (C3), and six regulatory PyrI chains organized as three dimers (R2).

It carries out the reaction carbamoyl phosphate + L-aspartate = N-carbamoyl-L-aspartate + phosphate + H(+). The protein operates within pyrimidine metabolism; UMP biosynthesis via de novo pathway; (S)-dihydroorotate from bicarbonate: step 2/3. In terms of biological role, catalyzes the condensation of carbamoyl phosphate and aspartate to form carbamoyl aspartate and inorganic phosphate, the committed step in the de novo pyrimidine nucleotide biosynthesis pathway. This chain is Aspartate carbamoyltransferase catalytic subunit, found in Hydrogenovibrio crunogenus (strain DSM 25203 / XCL-2) (Thiomicrospira crunogena).